Reading from the N-terminus, the 53-residue chain is UPF0391 membrane protein msr4317 (53 aa).

2 helical membrane-spanning segments follow: residues tryptophan 4–alanine 24 and isoleucine 33–threonine 53.

It belongs to the UPF0391 family.

The protein localises to the cell membrane. The chain is UPF0391 membrane protein msr4317 from Mesorhizobium japonicum (strain LMG 29417 / CECT 9101 / MAFF 303099) (Mesorhizobium loti (strain MAFF 303099)).